The sequence spans 197 residues: FMN-dependent NADH:quinone oxidoreductase (197 aa).

FMN-binding positions include Ser-10, 16–18, and 96–99; these read SKS and MYNF.

It belongs to the azoreductase type 1 family. In terms of assembly, homodimer. The cofactor is FMN.

The enzyme catalyses 2 a quinone + NADH + H(+) = 2 a 1,4-benzosemiquinone + NAD(+). It catalyses the reaction N,N-dimethyl-1,4-phenylenediamine + anthranilate + 2 NAD(+) = 2-(4-dimethylaminophenyl)diazenylbenzoate + 2 NADH + 2 H(+). Quinone reductase that provides resistance to thiol-specific stress caused by electrophilic quinones. Functionally, also exhibits azoreductase activity. Catalyzes the reductive cleavage of the azo bond in aromatic azo compounds to the corresponding amines. This Marinomonas sp. (strain MWYL1) protein is FMN-dependent NADH:quinone oxidoreductase.